Consider the following 264-residue polypeptide: MKQYKDLCRHVLEHGEKKGDRTGTGTISTFGYQMRFHLQEGFPMLTTKKLHFKSIAHELLWFLKGDTNVRYLQENGVRIWNEWADENGELGPVYGSQWRSWRGADGETIDQISRLIEDIKTNPNSRRLIVSAWNVGEIDKMALPPCHCLFQFYVSDGKLSCQLYQRSADVFLGVPFNIASYALLTMMIAHVTGLEPGEFIHTFGDVHIYQNHIEQVNLQLTRDVRPLPKLRFAREIDSIFNFAFEDFIIEDYDPHPHIKGAVSV.

A dUMP-binding site is contributed by arginine 21. Histidine 51 lines the (6R)-5,10-methylene-5,6,7,8-tetrahydrofolate pocket. 126 to 127 contributes to the dUMP binding site; that stretch reads RR. Cysteine 146 (nucleophile) is an active-site residue. DUMP contacts are provided by residues 166–169, asparagine 177, and 207–209; these read RSAD and HIY. Aspartate 169 contributes to the (6R)-5,10-methylene-5,6,7,8-tetrahydrofolate binding site. Residue serine 263 participates in (6R)-5,10-methylene-5,6,7,8-tetrahydrofolate binding.

It belongs to the thymidylate synthase family. Bacterial-type ThyA subfamily. Homodimer.

The protein localises to the cytoplasm. The enzyme catalyses dUMP + (6R)-5,10-methylene-5,6,7,8-tetrahydrofolate = 7,8-dihydrofolate + dTMP. The protein operates within pyrimidine metabolism; dTTP biosynthesis. Catalyzes the reductive methylation of 2'-deoxyuridine-5'-monophosphate (dUMP) to 2'-deoxythymidine-5'-monophosphate (dTMP) while utilizing 5,10-methylenetetrahydrofolate (mTHF) as the methyl donor and reductant in the reaction, yielding dihydrofolate (DHF) as a by-product. This enzymatic reaction provides an intracellular de novo source of dTMP, an essential precursor for DNA biosynthesis. The chain is Thymidylate synthase 2 from Bacillus spizizenii (strain ATCC 23059 / NRRL B-14472 / W23) (Bacillus subtilis subsp. spizizenii).